The primary structure comprises 274 residues: uncharacterized protein (274 aa).

Positions 235–274 are disordered; the sequence is ETFDTQQDPKKTPETDKNAAYKGKEKKGKKEERGPRSIMK. Residues 241–274 show a composition bias toward basic and acidic residues; that stretch reads QDPKKTPETDKNAAYKGKEKKGKKEERGPRSIMK.

This is an uncharacterized protein from Treponema pallidum (strain Nichols).